Consider the following 636-residue polypeptide: Zinc finger protein 90 (636 aa).

A KRAB domain is found at 14 to 85 (VTFKDVAVNF…EKEIQRPFCP (72 aa)). 7 C2H2-type zinc fingers span residues 208 to 230 (YKCDKCRKSFIHRSSLNKHEKIH), 250 to 272 (HECADCGKTFLWRTQLTEHQRIH), 278 to 300 (FECNVCGKAFRHSSSLGQHENAH), 306 to 328 (YQCSLCGKAFQRSSSLVQHQRIH), 334 to 356 (YRCNLCGRSFRHSTSLTQHEVTH), 362 to 384 (FQCKECGKAFSRCSSLVQHERTH), and 390 to 412 (FECSICGRAFGQSPSLYKHMRIH). The disordered stretch occupies residues 227–247 (EKIHKGDPYSNGTDQGAQSGR). Lys-444 is covalently cross-linked (Glycyl lysine isopeptide (Lys-Gly) (interchain with G-Cter in SUMO2)). 6 consecutive C2H2-type zinc fingers follow at residues 446 to 468 (YHCNDCGKDFGHITDFSEHQRLH), 494 to 516 (YQCNVCGKAFKRSTSFIEHHRIH), 522 to 544 (YECNECGEAFSRLSSLTQHERTH), 550 to 572 (YECIDCGKAFSQSSSLIQHERTH), 578 to 600 (YECNECGRAFRKKTNLHDHQRTH), and 606 to 628 (YACKECGRNFSRSSALTKHHRVH).

The protein belongs to the krueppel C2H2-type zinc-finger protein family. Interacts (via N- and C-termini) with REST (via zinc-finger DNA-binding domain); the interaction inhibits REST repressor activity. Brain, spleen, thymus, and testis. Expressed in heart.

It localises to the nucleus. In terms of biological role, inhibits the transcriptional repressor activity of REST by inhibiting its binding to DNA, thereby derepressing transcription of REST target genes. The sequence is that of Zinc finger protein 90 (Zfp90) from Mus musculus (Mouse).